We begin with the raw amino-acid sequence, 473 residues long: Ribulose bisphosphate carboxylase large chain 1 (473 aa).

Asn116 and Thr166 together coordinate substrate. The Proton acceptor role is filled by Lys168. Position 170 (Lys170) interacts with substrate. 3 residues coordinate Mg(2+): Lys194, Asp196, and Glu197. Lys194 is modified (N6-carboxylysine). His287 (proton acceptor) is an active-site residue. Substrate is bound by residues Arg288, His320, and Ser372.

The protein belongs to the RuBisCO large chain family. Type I subfamily. As to quaternary structure, heterohexadecamer of 8 large chains and 8 small chains. Mg(2+) serves as cofactor.

The enzyme catalyses 2 (2R)-3-phosphoglycerate + 2 H(+) = D-ribulose 1,5-bisphosphate + CO2 + H2O. It catalyses the reaction D-ribulose 1,5-bisphosphate + O2 = 2-phosphoglycolate + (2R)-3-phosphoglycerate + 2 H(+). In terms of biological role, ruBisCO catalyzes two reactions: the carboxylation of D-ribulose 1,5-bisphosphate, the primary event in carbon dioxide fixation, as well as the oxidative fragmentation of the pentose substrate. Both reactions occur simultaneously and in competition at the same active site. In Acidithiobacillus ferrooxidans (Thiobacillus ferrooxidans), this protein is Ribulose bisphosphate carboxylase large chain 1.